Reading from the N-terminus, the 278-residue chain is Transmembrane protein 41B (278 aa).

Residues 1-31 (MQVHERSHTGGHTCQCNHGSEKKAPATGKVH) are disordered. 6 helical membrane-spanning segments follow: residues 39 to 59 (MSLL…FLVY), 96 to 116 (FYVE…TFAI), 132 to 154 (FPLA…YLLS), 184 to 204 (LINY…FINI), 212 to 232 (PLKV…FVAI), and 249 to 269 (SWNS…PAIF). The interval 127-238 (GFLYPFPLAL…FVAIKAGTTL (112 aa)) is VTT domain; required for its function in autophagy.

This sequence belongs to the TMEM41 family.

It localises to the endoplasmic reticulum membrane. Its subcellular location is the endomembrane system. It catalyses the reaction a 1,2-diacyl-sn-glycero-3-phospho-L-serine(in) = a 1,2-diacyl-sn-glycero-3-phospho-L-serine(out). The enzyme catalyses cholesterol(in) = cholesterol(out). The catalysed reaction is a 1,2-diacyl-sn-glycero-3-phosphocholine(in) = a 1,2-diacyl-sn-glycero-3-phosphocholine(out). It carries out the reaction a 1,2-diacyl-sn-glycero-3-phosphoethanolamine(in) = a 1,2-diacyl-sn-glycero-3-phosphoethanolamine(out). Functionally, phospholipid scramblase involved in lipid homeostasis and membrane dynamics processes. Has phospholipid scramblase activity toward cholesterol and phosphatidylserine, as well as phosphatidylethanolamine and phosphatidylcholine. Required for autophagosome formation: participates in early stages of autophagosome biogenesis at the endoplasmic reticulum (ER) membrane by reequilibrating the leaflets of the ER as lipids are extracted by atg2 (atg2a or atg2b) to mediate autophagosome assembly. In addition to autophagy, involved in other processes in which phospholipid scramblase activity is required. Required for normal motor neuron development. The protein is Transmembrane protein 41B of Xenopus tropicalis (Western clawed frog).